The following is a 223-amino-acid chain: N-(5'-phosphoribosyl)anthranilate isomerase (223 aa).

It belongs to the TrpF family.

The enzyme catalyses N-(5-phospho-beta-D-ribosyl)anthranilate = 1-(2-carboxyphenylamino)-1-deoxy-D-ribulose 5-phosphate. It participates in amino-acid biosynthesis; L-tryptophan biosynthesis; L-tryptophan from chorismate: step 3/5. This Moorella thermoacetica (strain ATCC 39073 / JCM 9320) protein is N-(5'-phosphoribosyl)anthranilate isomerase.